A 1322-amino-acid chain; its full sequence is Sal-like protein 1 (1322 aa).

The tract at residues 1 to 41 (MSRRKQAKPQHFQSDPEVASLPRRDGDTEKGQPSRPTKSKD) is disordered. Positions 22-41 (PRRDGDTEKGQPSRPTKSKD) are enriched in basic and acidic residues. The C2H2-type 1; atypical zinc finger occupies 43-65 (HVCGRCCAEFFELSDLLLHKKSC). The interval 78–128 (PASPAKTFPPGPSLNDPDDQMKDAANKADQEDCSDLSEPKGLDREESMEVE) is disordered. Basic and acidic residues-rich tracts occupy residues 96–107 (DQMKDAANKADQ) and 114–124 (SEPKGLDREES). A Glycyl lysine isopeptide (Lys-Gly) (interchain with G-Cter in SUMO2) cross-link involves residue Lys440. 2 C2H2-type zinc fingers span residues 450–472 (HKCR…LRSH) and 478–500 (FKCN…FQRH). The tract at residues 578-659 (PIPISHSAAS…GGPGGTTFTN (82 aa)) is disordered. Positions 584–594 (SAASPQGSVKS) are enriched in polar residues. Phosphoserine is present on residues Ser591, Ser594, and Ser596. The segment covering 629-645 (NMASSAVPTAGNSTLNS) has biased composition (polar residues). Glycyl lysine isopeptide (Lys-Gly) (interchain with G-Cter in SUMO2) cross-links involve residues Lys672, Lys689, and Lys700. 3 consecutive C2H2-type zinc fingers follow at residues 705–727 (NECI…YRTH), 733–755 (FKCK…YSVH), and 765–787 (HSCP…IRMH). Disordered regions lie at residues 789 to 855 (GGQI…SSPL) and 891 to 961 (SMEG…GLSP). Positions 819–832 (DLDNFSDENMEECP) are enriched in acidic residues. The segment covering 842 to 855 (SADASQDSLSSSPL) has biased composition (low complexity). Positions 898-935 (TNDSSSVGGDMESQSAGSPAISESTSSMQALSPSNSTQ) are enriched in polar residues. The segment covering 936–948 (EFHKSPGMEEKPQ) has biased composition (basic and acidic residues). Residue Ser940 is modified to Phosphoserine. Residues Lys946 and Lys981 each participate in a glycyl lysine isopeptide (Lys-Gly) (interchain with G-Cter in SUMO2) cross-link. 2 C2H2-type zinc fingers span residues 1000–1022 (TACD…YRSH) and 1028–1050 (FICT…MLTH). Lys1085 participates in a covalent cross-link: Glycyl lysine isopeptide (Lys-Gly) (interchain with G-Cter in SUMO2). Residues 1094–1119 (VSPQDSKDAPTSHVPQGPLSSSATSP) are disordered. C2H2-type zinc fingers lie at residues 1133 to 1155 (HYCN…ERTH) and 1161 to 1183 (FACT…MGTH). Residues Lys1218, Lys1297, and Lys1317 each participate in a glycyl lysine isopeptide (Lys-Gly) (interchain with G-Cter in SUMO2) cross-link.

It belongs to the sal C2H2-type zinc-finger protein family. As to quaternary structure, may associate with NuRD histone deacetylase complex (HDAC). Interacts with components of HDAC complex including HDAC1, HDAC2, RBBP4, RBPP7, MTA1 and MTA2. Interacts with CCNQ. Interacts with NSD2 (via PHD-type zinc fingers 1, 2 and 3). In terms of tissue distribution, expressed in the metanephric mesenchyme surrounding ureteric bud.

The protein localises to the nucleus. Functionally, transcriptional repressor involved in organogenesis. Plays an essential role in ureteric bud invasion during kidney development. This Mus musculus (Mouse) protein is Sal-like protein 1 (Sall1).